Reading from the N-terminus, the 277-residue chain is Putative thiosulfate sulfurtransferase (277 aa).

2 Rhodanese domains span residues 18-125 and 154-274; these read HAPK…PLSS and AINV…APIE. Cys233 functions as the Cysteine persulfide intermediate in the catalytic mechanism. Arg238 contributes to the substrate binding site.

The enzyme catalyses thiosulfate + hydrogen cyanide = thiocyanate + sulfite + 2 H(+). In terms of biological role, may be a sulfotransferase involved in the formation of thiosulfate. In Mycobacterium tuberculosis (strain CDC 1551 / Oshkosh), this protein is Putative thiosulfate sulfurtransferase (cysA1).